Consider the following 475-residue polypeptide: MTQSVVVQVGQCGNQIGCCFWDLALREHAAVNQKGIYDEAISSFFRNVDTRVVGDGGSISKGKICSLKARAVLIDMEEGVVNEILQGPLRDVFDTKQLITDISGSGNNWAVGHKVFGSLYQDQILEKFRKSAEHCDCLQCFFIIHSMGGGTGSGLGTFLLKVLEDEFPEVYRFVTSIYPSGEDDVITSPYNSILAMKELNEHADCVLPIDNQSLFDIISKIDLMVNSGKLGTTVKPKSLVTSSSGALKKQHKKPFDAMNNIVANLLLNLTSSARFEGSLNMDLNEISMNLVPFPQLHYLVSSLTPLYTLTDVNIPPRRLDQMFSDAFSKDHQLLRADPKHSLYLACALMVRGNVQISDLRRNIERLKPSLQFVSWNQEGWKTSLCSVPPVGHSHSLLALANNTCVKPTFMELKERFMRLYKKKAHLHHYLQVEGMEESCFTEAVSSLSALIQEYDQLDATKNMPVQDLPRLSIAM.

148-154 (GGGTGSG) lines the GTP pocket.

It belongs to the tubulin family. As to quaternary structure, found in a complex with TEDC1, TEDC2, TUBE1 and TUBD1.

Its subcellular location is the cytoplasm. The protein resides in the cytoskeleton. It localises to the microtubule organizing center. It is found in the centrosome. In Homo sapiens (Human), this protein is Tubulin epsilon chain (TUBE1).